A 579-amino-acid chain; its full sequence is Leucine-rich repeat-containing protein 15 (579 aa).

Residues 1-21 (MPLKHYLLLLVSCQAWAAGLA) form the signal peptide. Residues 22–53 (YYGCPSECTCSRASQVECTGAQIVAMPSPLPW) form the LRRNT domain. Over 22 to 536 (YYGCPSECTC…TWGMTDAQSG (515 aa)) the chain is Extracellular. LRR repeat units lie at residues 54 to 75 (NAMS…KFLN), 78 to 99 (ALIA…AFRN), 102 to 123 (SLRH…LFQD), 126 to 147 (NLET…QFSQ), 150 to 171 (NLKE…VFDH), 174 to 195 (GLTK…VFQH), 198 to 219 (NLQV…TFDA), 222 to 243 (NLQE…LFHN), 246 to 267 (NLQR…IFMQ), 270 to 291 (HLNK…VFGP), 294 to 315 (NLRE…AFSH), 318 to 339 (QLQV…AFNG), 342 to 363 (NLRE…VFRS), 366 to 387 (NLRN…IFAN), and 390 to 411 (GLMT…IFDH). N-linked (GlcNAc...) asparagine glycosylation is present at asparagine 75. N-linked (GlcNAc...) asparagine glycosylation is present at asparagine 369. Positions 423 to 473 (NPWRCDSNILPLHDWLILNRARLGTDTLPVCSSPASVRGQSLVIINVNFPG) constitute an LRRCT domain. The interval 476-509 (VQGPETPEVSSYPDTSSYPDSTSISSTTEITRST) is disordered. The segment covering 485 to 506 (SSYPDTSSYPDSTSISSTTEIT) has biased composition (low complexity). A helical membrane pass occupies residues 537-557 (LAIAAIVIGIIALACSLAACI). Topologically, residues 558–579 (CCCCCKKRSQAVLMQMKAPNEC) are cytoplasmic.

Expressed in chodrocytes (at protein level).

The protein localises to the cell membrane. This chain is Leucine-rich repeat-containing protein 15 (Lrrc15), found in Mus musculus (Mouse).